The sequence spans 72 residues: Translation initiation factor IF-1 (72 aa).

In terms of domain architecture, S1-like spans 1–72 (MAKEDNIEMQ…SKGRIVFRSR (72 aa)).

This sequence belongs to the IF-1 family. In terms of assembly, component of the 30S ribosomal translation pre-initiation complex which assembles on the 30S ribosome in the order IF-2 and IF-3, IF-1 and N-formylmethionyl-tRNA(fMet); mRNA recruitment can occur at any time during PIC assembly.

The protein resides in the cytoplasm. Functionally, one of the essential components for the initiation of protein synthesis. Stabilizes the binding of IF-2 and IF-3 on the 30S subunit to which N-formylmethionyl-tRNA(fMet) subsequently binds. Helps modulate mRNA selection, yielding the 30S pre-initiation complex (PIC). Upon addition of the 50S ribosomal subunit IF-1, IF-2 and IF-3 are released leaving the mature 70S translation initiation complex. This Sodalis glossinidius (strain morsitans) protein is Translation initiation factor IF-1.